A 132-amino-acid chain; its full sequence is Small ribosomal subunit protein uS8 (132 aa).

This sequence belongs to the universal ribosomal protein uS8 family. In terms of assembly, part of the 30S ribosomal subunit. Contacts proteins S5 and S12.

One of the primary rRNA binding proteins, it binds directly to 16S rRNA central domain where it helps coordinate assembly of the platform of the 30S subunit. This chain is Small ribosomal subunit protein uS8, found in Oceanobacillus iheyensis (strain DSM 14371 / CIP 107618 / JCM 11309 / KCTC 3954 / HTE831).